The primary structure comprises 1055 residues: TNF receptor-associated factor homolog 1a (1055 aa).

A disordered region spans residues methionine 1–aspartate 56. A compositionally biased stretch (polar residues) spans serine 37–serine 46. Positions phenylalanine 68–valine 191 constitute an MATH domain. Disordered stretches follow at residues proline 352–aspartate 380, alanine 431–tyrosine 590, phenylalanine 603–isoleucine 772, and valine 820–serine 845. Over residues serine 433–lysine 446 the composition is skewed to basic and acidic residues. Residues alanine 441–lysine 496 are a coiled coil. The segment covering lysine 447–asparagine 460 has biased composition (basic residues). Over residues lysine 461–valine 486 the composition is skewed to basic and acidic residues. Low complexity predominate over residues aspartate 502–serine 513. The span at arginine 524–glutamate 537 shows a compositional bias: basic and acidic residues. Polar residues predominate over residues methionine 569–alanine 586. Positions glutamine 657–valine 668 are enriched in basic and acidic residues. 2 stretches are compositionally biased toward polar residues: residues lysine 723–threonine 740 and serine 823–serine 845.

As to quaternary structure, interacts with AHK3. Interacts with ATG6, SINAT1, SINAT2, SINAT5 and SINAT6.

The protein localises to the cytoplasm. Its function is as follows. Functions redundantly with TRAF1B in the regulation of plant immune response. Contributes to the turnover of the nucleotide-binding domain and leucine-rich repeat-containing (NB-LRR) immune receptors SNC1 and RPS2. May associate with an E3 ubiquitin-protein ligase complex, which modulates ubiquitination and subsequent degradation of NB-LRR immune sensors to maintain their homeostasis. Functions redundantly with TRAF1B in the regulation of autophagosome formation. Required for SINAT1- and SINAT2-mediated ubiquitination and destabilization of ATG6. Functions as a molecular adapter that helps to regulate autophagy by modulating ATG6 stability. The protein is TNF receptor-associated factor homolog 1a of Arabidopsis thaliana (Mouse-ear cress).